We begin with the raw amino-acid sequence, 287 residues long: Protease HtpX (287 aa).

2 consecutive transmembrane segments (helical) span residues 4–24 (IFLLIATNLAVLLVASIVMSI) and 33–53 (GGLLVFAAIFGFGGAFISLAI). His-139 is a binding site for Zn(2+). Residue Glu-140 is part of the active site. A Zn(2+)-binding site is contributed by His-143. 2 consecutive transmembrane segments (helical) span residues 154–174 (LIQGVVNTFVIFAARVVAGII) and 195–215 (AVVFVLDMLFGILASIIVAYF). Glu-220 lines the Zn(2+) pocket.

The protein belongs to the peptidase M48B family. Zn(2+) is required as a cofactor.

It localises to the cell inner membrane. The protein is Protease HtpX of Shewanella baltica (strain OS185).